Here is a 243-residue protein sequence, read N- to C-terminus: Phosphoribosyl isomerase A (243 aa).

Aspartate 9 functions as the Proton acceptor in the catalytic mechanism. Aspartate 128 functions as the Proton donor in the catalytic mechanism.

It belongs to the HisA/HisF family.

It is found in the cytoplasm. It carries out the reaction 1-(5-phospho-beta-D-ribosyl)-5-[(5-phospho-beta-D-ribosylamino)methylideneamino]imidazole-4-carboxamide = 5-[(5-phospho-1-deoxy-D-ribulos-1-ylimino)methylamino]-1-(5-phospho-beta-D-ribosyl)imidazole-4-carboxamide. It catalyses the reaction N-(5-phospho-beta-D-ribosyl)anthranilate = 1-(2-carboxyphenylamino)-1-deoxy-D-ribulose 5-phosphate. It participates in amino-acid biosynthesis; L-histidine biosynthesis; L-histidine from 5-phospho-alpha-D-ribose 1-diphosphate: step 4/9. It functions in the pathway amino-acid biosynthesis; L-tryptophan biosynthesis; L-tryptophan from chorismate: step 3/5. Involved in both the histidine and tryptophan biosynthetic pathways. The sequence is that of Phosphoribosyl isomerase A from Mycobacterium avium (strain 104).